The primary structure comprises 372 residues: Small ribosomal subunit protein mS77 (rPPR2) (372 aa).

Residues 1 to 28 constitute a mitochondrion transit peptide; the sequence is MKSFLLSRQAIHRISLLSSKTPTFCRNF. Positions 240-265 are disordered; it reads DNSIRESETVDGEVEEEGFVPSDEVE. Residues 248–257 show a composition bias toward acidic residues; that stretch reads TVDGEVEEEG.

In terms of assembly, component of the mitochondrial ribosome small subunit.

The protein resides in the mitochondrion. Its function is as follows. Required for karyogamy during female gametophyte development, when the two polar nuclei fuse to form the diploid central cell nucleus. In Arabidopsis thaliana (Mouse-ear cress), this protein is Small ribosomal subunit protein mS77 (rPPR2).